Reading from the N-terminus, the 238-residue chain is 2-C-methyl-D-erythritol 4-phosphate cytidylyltransferase (238 aa).

The protein belongs to the IspD/TarI cytidylyltransferase family. IspD subfamily.

It carries out the reaction 2-C-methyl-D-erythritol 4-phosphate + CTP + H(+) = 4-CDP-2-C-methyl-D-erythritol + diphosphate. Its pathway is isoprenoid biosynthesis; isopentenyl diphosphate biosynthesis via DXP pathway; isopentenyl diphosphate from 1-deoxy-D-xylulose 5-phosphate: step 2/6. Functionally, catalyzes the formation of 4-diphosphocytidyl-2-C-methyl-D-erythritol from CTP and 2-C-methyl-D-erythritol 4-phosphate (MEP). In Alteromonas mediterranea (strain DSM 17117 / CIP 110805 / LMG 28347 / Deep ecotype), this protein is 2-C-methyl-D-erythritol 4-phosphate cytidylyltransferase.